Consider the following 207-residue polypeptide: Imidazoleglycerol-phosphate dehydratase (207 aa).

This sequence belongs to the imidazoleglycerol-phosphate dehydratase family.

It is found in the cytoplasm. The enzyme catalyses D-erythro-1-(imidazol-4-yl)glycerol 3-phosphate = 3-(imidazol-4-yl)-2-oxopropyl phosphate + H2O. It participates in amino-acid biosynthesis; L-histidine biosynthesis; L-histidine from 5-phospho-alpha-D-ribose 1-diphosphate: step 6/9. The chain is Imidazoleglycerol-phosphate dehydratase from Mycobacterium avium (strain 104).